We begin with the raw amino-acid sequence, 603 residues long: MKNLWIWSLPLIVLAFIGWQELANQMPVATSRMTYGRLLEYMQMGWVKRIDVYDRTALIEASSPETGWQWIRVDLPANSSDWLEQAKTLHIDVDVHAVSNWINVASNWIIPLIIIGVVIWLLSRSASSNTTGALNFGKSKARFQMVAKTGIMFDDVAGIEEAKEELAEVVAFLKNPSKFLAVGASIPKGVLLVGPPGTGKTLLAKAIAGEASVPFFSISGSEFVEMFVGVGASRVRDLFKKAKQNAPCLVFIDEIDAVGRQRGAGIGGGNDEREQTLNQLLTEMDGFEGNTGVIVIAATNRVDVLDAALLRPGRFDRQIMVSMPDVKSRIAILKVHANQKKLHPQVSLEAVARRTAGFAGADLANLLNEAAILAVRRGLKQITWKEIDDAIDRVIAGMEGTPIMDGKIKRLIAYHETGHALTATLLPNHPPVQKVTLIPRRQAKGLTWFMQDNERDLLSKSQLMSMIMVALGGRAAEEAVFGNAEVTTGASNDLQQVTNLARQMVTRFGMSSLGPLCLETGNEEIFLGRDMRLMPEVSEEVIAQIDAQVRGMIEACYEKVLELMQANRVVMDRIVEELMEKETLDGKEFRQLVSQAARLTAVN.

Residues 1–2 (MK) are Stromal-facing. The helical transmembrane segment at 3-23 (NLWIWSLPLIVLAFIGWQELA) threads the bilayer. At 24-101 (NQMPVATSRM…DVDVHAVSNW (78 aa)) the chain is on the lumenal side. Residues 102–122 (INVASNWIIPLIIIGVVIWLL) form a helical membrane-spanning segment. Over 123 to 603 (SRSASSNTTG…SQAARLTAVN (481 aa)) the chain is Stromal. 194-201 (GPPGTGKT) lines the ATP pocket. His-415 contacts Zn(2+). The active site involves Glu-416. Zn(2+)-binding residues include His-419 and Asp-493.

In the central section; belongs to the AAA ATPase family. This sequence in the C-terminal section; belongs to the peptidase M41 family. As to quaternary structure, homohexamer. It depends on Zn(2+) as a cofactor.

The protein localises to the plastid. The protein resides in the chloroplast thylakoid membrane. Acts as a processive, ATP-dependent zinc metallopeptidase. The polypeptide is ATP-dependent zinc metalloprotease FtsH (Cyanidioschyzon merolae (strain NIES-3377 / 10D) (Unicellular red alga)).